A 293-amino-acid polypeptide reads, in one-letter code: Mitochondrial inner membrane protease atp23 (293 aa).

Residues 1 to 51 (MSPAPTTSAGPASSGIPPSSLPTSTVTEDDTKPSSSSSKANDLLPRYLTND) form a disordered region. Residues 8–22 (SAGPASSGIPPSSLP) are compositionally biased toward low complexity. Histidine 190 is an a divalent metal cation binding site. Glutamate 191 is a catalytic residue. Residue histidine 194 participates in a divalent metal cation binding.

The protein belongs to the peptidase M76 family.

It is found in the mitochondrion inner membrane. Its function is as follows. Has a dual role in the assembly of mitochondrial ATPase. Acts as a protease that removes N-terminal residues of mitochondrial ATPase CF(0) subunit 6 at the intermembrane space side. Also involved in the correct assembly of the membrane-embedded ATPase CF(0) particle, probably mediating association of subunit 6 with the subunit 9 ring. This is Mitochondrial inner membrane protease atp23 (atp23) from Neurospora crassa (strain ATCC 24698 / 74-OR23-1A / CBS 708.71 / DSM 1257 / FGSC 987).